We begin with the raw amino-acid sequence, 430 residues long: Formate-dependent phosphoribosylglycinamide formyltransferase (430 aa).

Residues 26–27 (EL) and glutamate 86 each bind N(1)-(5-phospho-beta-D-ribosyl)glycinamide. ATP-binding positions include arginine 118, lysine 159, 199 to 202 (EEHI), and glutamate 207. An ATP-grasp domain is found at 123 to 319 (ETLVKEAKVP…EFALHLRAVL (197 aa)). Residues glutamate 276 and glutamate 288 each contribute to the Mg(2+) site. N(1)-(5-phospho-beta-D-ribosyl)glycinamide-binding positions include aspartate 295, lysine 375, and 382–383 (RR).

Belongs to the PurK/PurT family. As to quaternary structure, homodimer.

It carries out the reaction N(1)-(5-phospho-beta-D-ribosyl)glycinamide + formate + ATP = N(2)-formyl-N(1)-(5-phospho-beta-D-ribosyl)glycinamide + ADP + phosphate + H(+). It functions in the pathway purine metabolism; IMP biosynthesis via de novo pathway; N(2)-formyl-N(1)-(5-phospho-D-ribosyl)glycinamide from N(1)-(5-phospho-D-ribosyl)glycinamide (formate route): step 1/1. Involved in the de novo purine biosynthesis. Catalyzes the transfer of formate to 5-phospho-ribosyl-glycinamide (GAR), producing 5-phospho-ribosyl-N-formylglycinamide (FGAR). Formate is provided by PurU via hydrolysis of 10-formyl-tetrahydrofolate. In Pyrococcus horikoshii (strain ATCC 700860 / DSM 12428 / JCM 9974 / NBRC 100139 / OT-3), this protein is Formate-dependent phosphoribosylglycinamide formyltransferase.